The primary structure comprises 2382 residues: Nonribosomal peptide synthetase chyA (2382 aa).

Positions 204 to 607 are adenylation 1; it reads QKCATQPESI…LGRKDHQVKI (404 aa). The 77-residue stretch at 745 to 821 folds into the Carrier 1 domain; it reads TPTTQNQRIL…DMASVLVKDH (77 aa). O-(pantetheine 4'-phosphoryl)serine is present on serine 782. Residues 857–1269 form a condensation 1 region; sequence EDVYPCTHMQ…LVPPEDMATL (413 aa). Residues 1294-1687 form an adenylation 2 region; sequence GQPDTLAIHS…VGRKDDQVKL (394 aa). The Carrier 2 domain occupies 1833–1909; it reads VPVSIHGRKV…GLSLKCATEN (77 aa). Position 1870 is an O-(pantetheine 4'-phosphoryl)serine (serine 1870). Residues 1967 to 2373 form a condensation 2 region; sequence MTLHNFYSRY…FSDVIESLAS (407 aa).

Belongs to the NRP synthetase family.

Its pathway is pigment biosynthesis. Functionally, nonribosomal peptide synthetase; part of the gene cluster that mediates the biosynthesis of the yellow pigment chrysogine. the NRPS chyA mediates the condensation of anthranilic acid and alanine into the intermediate 2-(2-aminopropanamido)benzoic acid. The remainder of the pathway is highly branched yielding at least 13 chrysogine-related compounds. The malonyl transferase chyE converts 2-(2-aminopropanamido)benzoic acid and 2-(2-aminopropanamido)benzamidine into 2-(2-(2-carboxyacetamido)propanamido)benzoic acid and 3-((1-((2-carbamoylphenyl)amino)-1-oxopropan-2-yl)amino)-3-oxopropanoic acid, respectively. ChyD is an amidase, being responsible for the amidation of the carboxylic acid moiety of 2-(2-aminopropanamido)benzoic acid, 2-(2-(2-carboxyacetamido)propanamido)benzoic acid and 2-(2-((4-amino-1-carboxy-4-oxobutyl)amino)propanamido)benzoic acid. ChyC is involved in the same reactions as ChyD, but plays a more minor role in the amidation reactions compared to chyD. The oxidoreductases chyH and chyM are involved in oxidation reactions that form N-pyruvoylanthranilamide from 2-(2-aminopropanamido)benzamidine and (1-((2-carbamoylphenyl)amino)-1-oxopropan-2-yl)glutamine, respectively. N-pyruvoylanthranilamide is further converted via two further branches in the pathway, yielding chrysogine and additional chrysogine-related coumpounds. Chrysogine is likely formed by a spontaneous ring closure from N-pyruvoylanthranilamide. The sequence is that of Nonribosomal peptide synthetase chyA from Penicillium rubens (strain ATCC 28089 / DSM 1075 / NRRL 1951 / Wisconsin 54-1255) (Penicillium chrysogenum).